Consider the following 335-residue polypeptide: Biotin synthase (335 aa).

In terms of domain architecture, Radical SAM core spans 46 to 274 (YDIQLASLFS…KSKIRLSAGR (229 aa)). Residues C61, C65, and C68 each coordinate [4Fe-4S] cluster. Residues C105, C137, C197, and R269 each contribute to the [2Fe-2S] cluster site.

This sequence belongs to the radical SAM superfamily. Biotin synthase family. Homodimer. Requires [4Fe-4S] cluster as cofactor. It depends on [2Fe-2S] cluster as a cofactor.

The catalysed reaction is (4R,5S)-dethiobiotin + (sulfur carrier)-SH + 2 reduced [2Fe-2S]-[ferredoxin] + 2 S-adenosyl-L-methionine = (sulfur carrier)-H + biotin + 2 5'-deoxyadenosine + 2 L-methionine + 2 oxidized [2Fe-2S]-[ferredoxin]. It functions in the pathway cofactor biosynthesis; biotin biosynthesis; biotin from 7,8-diaminononanoate: step 2/2. Functionally, catalyzes the conversion of dethiobiotin (DTB) to biotin by the insertion of a sulfur atom into dethiobiotin via a radical-based mechanism. The protein is Biotin synthase of Prochlorococcus marinus (strain MIT 9215).